Consider the following 218-residue polypeptide: MGQKINPIGFRLGTTQGHHSLWFAQPKNYSEGLQEDQKIRNYIKNYVQKNMKTSSGVEGIARIEIQKRIDLIQIIIYMGFPKILIESRPRGIEELQMNLQKEFNSVNRKLNIAITRIEKPYGNPNILAEFIAGQLKNRVSFRKAMKKAIELTEQADTKGIQVQIAGRIDGKEIARVEWIREGRVPLQTIRAKIDYCSYTVRTIYGVLGIKIWIFIEGE.

Residues 47–118 (VQKNMKTSSG…KLNIAITRIE (72 aa)) enclose the KH type-2 domain.

The protein belongs to the universal ribosomal protein uS3 family. As to quaternary structure, part of the 30S ribosomal subunit.

The protein localises to the plastid. It localises to the chloroplast. The chain is Small ribosomal subunit protein uS3c (rps3) from Helianthus annuus (Common sunflower).